Here is a 1025-residue protein sequence, read N- to C-terminus: MRLAHALLPLLLQACWVATQDIQGSKAIAFQDCPVDLFFVLDTSESVALRLKPYGALVDKVKSFTKRFIDNLRDRYYRCDRNLVWNAGALHYSDEVEIIRGLTRMPSGRDELKASVDAVKYFGKGTYTDCAIKKGLEELLIGGSHLKENKYLIVVTDGHPLEGYKEPCGGLEDAVNEAKHLGIKVFSVAITPDHLEPRLSIIATDHTYRRNFTAADWGHSRDAEEVISQTIDTIVDMIKNNVEQVCCSFECQAARGPPGPRGDPGYEGERGKPGLPGEKGEAGDPGRPGDLGPVGYQGMKGEKGSRGEKGSRGPKGYKGEKGKRGIDGVDGMKGETGYPGLPGCKGSPGFDGIQGPPGPKGDAGAFGMKGEKGEAGADGEAGRPGNSGSPGDEGDPGEPGPPGEKGEAGDEGNAGPDGAPGERGGPGERGPRGTPGVRGPRGDPGEAGPQGDQGREGPVGIPGDSGEAGPIGPKGYRGDEGPPGPEGLRGAPGPVGPPGDPGLMGERGEDGPPGNGTEGFPGFPGYPGNRGPPGLNGTKGYPGLKGDEGEVGDPGEDNNDISPRGVKGAKGYRGPEGPQGPPGHVGPPGPDECEILDIIMKMCSCCECTCGPIDILFVLDSSESIGLQNFEIAKDFIIKVIDRLSKDELVKFEPGQSHAGVVQYSHNQMQEHVDMRSPNVRNAQDFKEAVKKLQWMAGGTFTGEALQYTRDRLLPPTQNNRIALVITDGRSDTQRDTTPLSVLCGADIQVVSVGIKDVFGFVAGSDQLNVISCQGLSQGRPGISLVKENYAELLDDGFLKNITAQICIDKKCPDYTCPITFSSPADITILLDSSASVGSHNFETTKVFAKRLAERFLSAGRADPSQDVRVAVVQYSGQGQQQPGRAALQFLQNYTVLASSVDSMDFINDATDVNDALSYVTRFYREASSGATKKRVLLFSDGNSQGATAEAIEKAVQEAQRAGIEIFVVVVGPQVNEPHIRVLVTGKTAEYDVAFGERHLFRVPNYQALLRGVLYQTVSRKVALG.

An N-terminal signal peptide occupies residues 1–19; it reads MRLAHALLPLLLQACWVAT. Residues 20-255 form an N-terminal globular domain region; that stretch reads QDIQGSKAIA…CCSFECQAAR (236 aa). The VWFA 1 domain occupies 36–234; that stretch reads DLFFVLDTSE…EVISQTIDTI (199 aa). Asparagine 211 carries an N-linked (GlcNAc...) asparagine glycan. Residues 252–588 are disordered; it reads QAARGPPGPR…QGPPGHVGPP (337 aa). The segment at 256–591 is triple-helical region; the sequence is GPPGPRGDPG…PGHVGPPGPD (336 aa). A Cell attachment site motif is present at residues 261 to 263; sequence RGD. Composition is skewed to basic and acidic residues over residues 267–284 and 300–333; these read EGER…EAGD and KGEK…DGMK. Short sequence motifs (cell attachment site) lie at residues 441–443 and 477–479; these read RGD. N-linked (GlcNAc...) asparagine glycans are attached at residues asparagine 515 and asparagine 536. Residues 549–559 are compositionally biased toward acidic residues; that stretch reads GEVGDPGEDNN. Residues 578–588 show a composition bias toward pro residues; it reads PQGPPGHVGPP. The interval 592-1025 is C-terminal globular domain; it reads ECEILDIIMK…QTVSRKVALG (434 aa). VWFA domains are found at residues 614–802 and 826–1018; these read DILF…LKNI and DITI…YQTV. Residues asparagine 801 and asparagine 893 are each glycosylated (N-linked (GlcNAc...) asparagine).

This sequence belongs to the type VI collagen family. Trimers composed of three different chains: alpha-1(VI), alpha-2(VI), and alpha-3(VI) or alpha-4(VI) or alpha-5(VI) or alpha-6(VI). In terms of processing, prolines at the third position of the tripeptide repeating unit (G-X-Y) are hydroxylated in some or all of the chains.

It localises to the secreted. The protein resides in the extracellular space. It is found in the extracellular matrix. In terms of biological role, collagen VI acts as a cell-binding protein. The sequence is that of Collagen alpha-1(VI) chain (Col6a1) from Mus musculus (Mouse).